The sequence spans 152 residues: Endoribonuclease YbeY (152 aa).

3 residues coordinate Zn(2+): His-118, His-122, and His-128.

This sequence belongs to the endoribonuclease YbeY family. It depends on Zn(2+) as a cofactor.

The protein localises to the cytoplasm. Its function is as follows. Single strand-specific metallo-endoribonuclease involved in late-stage 70S ribosome quality control and in maturation of the 3' terminus of the 16S rRNA. The sequence is that of Endoribonuclease YbeY from Lacticaseibacillus casei (strain BL23) (Lactobacillus casei).